The chain runs to 497 residues: uncharacterized protein (497 aa).

2 consecutive ABC transporter domains span residues 9 to 247 (VSVR…MGQA) and 256 to 496 (ARPA…TGMA). 41–48 (GGNGAGKS) serves as a coordination point for ATP.

It belongs to the ABC transporter superfamily. Ribose importer (TC 3.A.1.2.1) family.

Its subcellular location is the cell membrane. Functionally, probably part of the binding-protein-dependent transport system y4mIJK. This system probably transports a sugar. Probably responsible for energy coupling to the transport system. This is an uncharacterized protein from Sinorhizobium fredii (strain NBRC 101917 / NGR234).